A 483-amino-acid chain; its full sequence is Putative (R)-citramalate synthase CimA (483 aa).

Residues 1–245 (MRDGEQTPGV…DTGIKHEQIY (245 aa)) enclose the Pyruvate carboxyltransferase domain.

This sequence belongs to the alpha-IPM synthase/homocitrate synthase family. Homodimer.

The catalysed reaction is pyruvate + acetyl-CoA + H2O = (3R)-citramalate + CoA + H(+). It functions in the pathway amino-acid biosynthesis; L-isoleucine biosynthesis; 2-oxobutanoate from pyruvate: step 1/3. Catalyzes the condensation of pyruvate and acetyl-coenzyme A to form (R)-citramalate. In Methanosarcina acetivorans (strain ATCC 35395 / DSM 2834 / JCM 12185 / C2A), this protein is Putative (R)-citramalate synthase CimA.